The sequence spans 327 residues: MIPGPATLPDLLDRLQVVALPMRVRFRGITTREVALIEGPSGWGEFGAFLEYQPPEAAAWLASAIDAAYGQPPPVRRGRIPINATVPAVPPAQVPELLARFPGARTAKVKVAEPGQTLASDVERVNAVRALVPTVRVDANGGWSVDQAAQAAVALTADGPLEYLEQPCATVGELAELRRRIEVPIAADEAIRKAEDPLAVVRAGAADVAVLKVAPLGGVWALLDIAAQIDIPVVISSALDSAVGIAAGLSAAAALPQLQHACGLGTGGLFVEDVAEPAIPVDGALAPQRVAPDPARLRALGAAPDRRQWWIDRIKACYPLLYRRSGD.

Residue Lys110 is the Proton donor of the active site. Mg(2+) is bound by residues Asp138, Glu165, and Asp188. Lys212 serves as the catalytic Proton acceptor.

It belongs to the mandelate racemase/muconate lactonizing enzyme family. MenC type 1 subfamily. The cofactor is a divalent metal cation.

It catalyses the reaction (1R,6R)-6-hydroxy-2-succinyl-cyclohexa-2,4-diene-1-carboxylate = 2-succinylbenzoate + H2O. The protein operates within quinol/quinone metabolism; 1,4-dihydroxy-2-naphthoate biosynthesis; 1,4-dihydroxy-2-naphthoate from chorismate: step 4/7. Its pathway is quinol/quinone metabolism; menaquinone biosynthesis. Converts 2-succinyl-6-hydroxy-2,4-cyclohexadiene-1-carboxylate (SHCHC) to 2-succinylbenzoate (OSB). This is o-succinylbenzoate synthase from Mycobacterium ulcerans (strain Agy99).